An 89-amino-acid polypeptide reads, in one-letter code: Small ribosomal subunit protein uS15 (89 aa).

Belongs to the universal ribosomal protein uS15 family. Part of the 30S ribosomal subunit. Forms a bridge to the 50S subunit in the 70S ribosome, contacting the 23S rRNA.

One of the primary rRNA binding proteins, it binds directly to 16S rRNA where it helps nucleate assembly of the platform of the 30S subunit by binding and bridging several RNA helices of the 16S rRNA. Functionally, forms an intersubunit bridge (bridge B4) with the 23S rRNA of the 50S subunit in the ribosome. The protein is Small ribosomal subunit protein uS15 of Heliobacterium modesticaldum (strain ATCC 51547 / Ice1).